The sequence spans 229 residues: Putative ankyrin repeat protein L148 (229 aa).

4 ANK repeats span residues 70–95 (ILDY…PDNY), 96–126 (IGTE…DLRI), 127–156 (NNDY…NCQA), and 157–186 (YNNA…SVAA).

In Acanthamoeba polyphaga (Amoeba), this protein is Putative ankyrin repeat protein L148.